The primary structure comprises 311 residues: 33 kDa chaperonin (311 aa).

2 disulfide bridges follow: Cys-240–Cys-242 and Cys-273–Cys-276.

It belongs to the HSP33 family. In terms of processing, under oxidizing conditions two disulfide bonds are formed involving the reactive cysteines. Under reducing conditions zinc is bound to the reactive cysteines and the protein is inactive.

It localises to the cytoplasm. Functionally, redox regulated molecular chaperone. Protects both thermally unfolding and oxidatively damaged proteins from irreversible aggregation. Plays an important role in the bacterial defense system toward oxidative stress. The polypeptide is 33 kDa chaperonin (Trichodesmium erythraeum (strain IMS101)).